Here is a 357-residue protein sequence, read N- to C-terminus: UDP-N-acetylglucosamine--N-acetylmuramyl-(pentapeptide) pyrophosphoryl-undecaprenol N-acetylglucosamine transferase (357 aa).

UDP-N-acetyl-alpha-D-glucosamine contacts are provided by residues 15–17, N125, S190, and Q290; that span reads SGG.

It belongs to the glycosyltransferase 28 family. MurG subfamily.

It is found in the cell inner membrane. The catalysed reaction is di-trans,octa-cis-undecaprenyl diphospho-N-acetyl-alpha-D-muramoyl-L-alanyl-D-glutamyl-meso-2,6-diaminopimeloyl-D-alanyl-D-alanine + UDP-N-acetyl-alpha-D-glucosamine = di-trans,octa-cis-undecaprenyl diphospho-[N-acetyl-alpha-D-glucosaminyl-(1-&gt;4)]-N-acetyl-alpha-D-muramoyl-L-alanyl-D-glutamyl-meso-2,6-diaminopimeloyl-D-alanyl-D-alanine + UDP + H(+). Its pathway is cell wall biogenesis; peptidoglycan biosynthesis. Its function is as follows. Cell wall formation. Catalyzes the transfer of a GlcNAc subunit on undecaprenyl-pyrophosphoryl-MurNAc-pentapeptide (lipid intermediate I) to form undecaprenyl-pyrophosphoryl-MurNAc-(pentapeptide)GlcNAc (lipid intermediate II). This Chlamydia pneumoniae (Chlamydophila pneumoniae) protein is UDP-N-acetylglucosamine--N-acetylmuramyl-(pentapeptide) pyrophosphoryl-undecaprenol N-acetylglucosamine transferase.